Here is a 243-residue protein sequence, read N- to C-terminus: rRNA adenine N-6-methyltransferase (243 aa).

S-adenosyl-L-methionine is bound by residues N11, I13, G38, E59, D84, and N101.

This sequence belongs to the class I-like SAM-binding methyltransferase superfamily. rRNA adenine N(6)-methyltransferase family.

The enzyme catalyses adenosine(2085) in 23S rRNA + 2 S-adenosyl-L-methionine = N(6)-dimethyladenosine(2085) in 23S rRNA + 2 S-adenosyl-L-homocysteine + 2 H(+). Functionally, this protein produces a dimethylation of the adenine residue at position 2085 in 23S rRNA, resulting in reduced affinity between ribosomes and macrolide-lincosamide-streptogramin B antibiotics. This is rRNA adenine N-6-methyltransferase (ermA1) from Staphylococcus aureus (strain Mu50 / ATCC 700699).